The primary structure comprises 172 residues: Small ribosomal subunit protein uS5 (172 aa).

An S5 DRBM domain is found at 7–70 (VVEHLVNVNR…QNAKKYMIEV (64 aa)).

It belongs to the universal ribosomal protein uS5 family. As to quaternary structure, part of the 30S ribosomal subunit. Contacts proteins S4 and S8.

Functionally, with S4 and S12 plays an important role in translational accuracy. Its function is as follows. Located at the back of the 30S subunit body where it stabilizes the conformation of the head with respect to the body. The protein is Small ribosomal subunit protein uS5 of Orientia tsutsugamushi (strain Boryong) (Rickettsia tsutsugamushi).